A 139-amino-acid polypeptide reads, in one-letter code: Transcription antitermination protein NusB (139 aa).

The protein belongs to the NusB family.

Involved in transcription antitermination. Required for transcription of ribosomal RNA (rRNA) genes. Binds specifically to the boxA antiterminator sequence of the ribosomal RNA (rrn) operons. This chain is Transcription antitermination protein NusB, found in Lactiplantibacillus plantarum (strain ATCC BAA-793 / NCIMB 8826 / WCFS1) (Lactobacillus plantarum).